We begin with the raw amino-acid sequence, 465 residues long: MESLRIYNTLARDKQVFVPRQSGEVRMYVCGITVYDYCHVGHARMLVVFDLVQRWLRAIGYRVTYVRNITDIEDKIIRRAVENGETIKSLTDRFIGAMHEDEAALGIQRPDLEPRATQFIPQMLGMIEKLETNGYAYQAADGDVNYSVRKFANYGKLSGKSLDDLRAGERVAANDAKEDPLDFVLWKRAKADDPPGATWASKYGMGRPGWHIECSAMGCTLLGEHFDIHGGGQDLQFPHHENEIAQSEGATGQTFVNYWMHNGFVQVDNEKMSKSLGNFFTIREVLERYDAEVMRFFIVRTHYRSPLNYSDVHLDDARASLTRLYTALKDVEPDALALDWNEPHAQRFAAAMNDDINTPVAVATLFELAGEINRTRDASLARQLKQLAGLLGLLGREPRAFLQQATGAAQAGGLAADEIEAKIAARVAAKQAKDYAEADRIRAELLDAGIALEDKPGGSTEWRRV.

Residue Cys-30 coordinates Zn(2+). A 'HIGH' region motif is present at residues 32–42; the sequence is ITVYDYCHVGH. 3 residues coordinate Zn(2+): Cys-214, His-239, and Glu-243. The short motif at 271–275 is the 'KMSKS' region element; sequence KMSKS. Residue Lys-274 participates in ATP binding.

It belongs to the class-I aminoacyl-tRNA synthetase family. Monomer. It depends on Zn(2+) as a cofactor.

It localises to the cytoplasm. It carries out the reaction tRNA(Cys) + L-cysteine + ATP = L-cysteinyl-tRNA(Cys) + AMP + diphosphate. The protein is Cysteine--tRNA ligase of Burkholderia ambifaria (strain ATCC BAA-244 / DSM 16087 / CCUG 44356 / LMG 19182 / AMMD) (Burkholderia cepacia (strain AMMD)).